A 131-amino-acid polypeptide reads, in one-letter code: MAMTDPLGDMLTRIRNGQQAKKDSVLSPASKLRAHVLEVLQREGYIRGFSEDTTGVHPQLRIELKYFEGQPAIKHVARVSKPGRRVYSGSKELPVIRNGLGITIVSTPKGVLSDAEARAANVGGEVLAEVF.

Belongs to the universal ribosomal protein uS8 family. Part of the 30S ribosomal subunit. Contacts proteins S5 and S12.

Functionally, one of the primary rRNA binding proteins, it binds directly to 16S rRNA central domain where it helps coordinate assembly of the platform of the 30S subunit. The sequence is that of Small ribosomal subunit protein uS8 from Novosphingobium aromaticivorans (strain ATCC 700278 / DSM 12444 / CCUG 56034 / CIP 105152 / NBRC 16084 / F199).